We begin with the raw amino-acid sequence, 292 residues long: RNA-binding P34 protein (292 aa).

A helical membrane pass occupies residues 29–46; that stretch reads CAIYTVACRILFLSVGFM. Positions 219–292 are RNA-binding; that stretch reads EGFKSPQVEY…NFKAKNKNNE (74 aa).

It is found in the host endoplasmic reticulum membrane. Functionally, acts as a ssRNA-binding protein that may be involved in targeting RNA2 to replication sites or facilitating RNA2 replication. This chain is RNA-binding P34 protein, found in Lettuce infectious yellows virus (isolate United States/92) (LIYV).